Here is a 190-residue protein sequence, read N- to C-terminus: uncharacterized protein (190 aa).

Positions 1–15 (MKVFAYIALATVVAG) are cleaved as a signal peptide.

It is found in the secreted. This is an uncharacterized protein from Arthroderma benhamiae (strain ATCC MYA-4681 / CBS 112371) (Trichophyton mentagrophytes).